The primary structure comprises 600 residues: MAALAALAKKVWSARRLLVLLLVPLALLPILFALPPKEGRCLYVILLMAVYWCTEALPLSVTALLPIILFPFMGILPSSKVCPQYFLDTNFLFLSGLIMASAIEERNLHRRIALKVLMLVGVQPARLILGMMVTTSFLSMWLSNTASTAMMLPIASAILKSLFGQRDTRKDLPREGEDSTAAVRGNGLRTVPTEMQFLASSEGGHAEDVEAPLELPDDSKEEEHRRNIWKGFLISIPYSASIGGTATLTGTAPNLILLGQLKSFFPQCDVVNFGSWFIFAFPLMLLFLLVGWLWISFLYGGMSWRGWRKKNSKLQDVAEDKAKAVIQEEFQNLGPIKFAEQAVFILFCLFAILLFSRDPKFIPGWASLFAPGFVSDAVTGVAIVTILFFFPSQKPSLKWWFDFKAPNSETEPLLSWKKAQETVPWNIILLLGGGFAMAKGCEESGLSAWIGGQLHPLEHVPPLLAVLLITVVIAFFTEFASNTATIIIFLPVLAELAIRLHVHPLYLMIPGTVSCSYAFMLPVSTPPNSIAFSTGHLLVKDMVRTGLLMNLMGVLLLSLAMNTWAQAIFQLGTFPDWANTHAANVTALPPALTNNTVQTL.

The Cytoplasmic portion of the chain corresponds to methionine 1–arginine 16. Residues leucine 17 to lysine 37 traverse the membrane as a helical segment. At glutamate 38–glutamate 55 the chain is on the extracellular side. A helical membrane pass occupies residues alanine 56–leucine 76. Residues proline 77–cysteine 82 lie on the Cytoplasmic side of the membrane. Residues proline 83 to isoleucine 103 traverse the membrane as a helical segment. Over glutamate 104–phenylalanine 137 the chain is Extracellular. A helical membrane pass occupies residues leucine 138–isoleucine 158. Topologically, residues leucine 159–tryptophan 229 are cytoplasmic. A helical transmembrane segment spans residues lysine 230–glycine 250. At threonine 251–isoleucine 278 the chain is on the extracellular side. The helical transmembrane segment at phenylalanine 279–tyrosine 299 threads the bilayer. Residues glycine 300–isoleucine 336 are Cytoplasmic-facing. A helical membrane pass occupies residues lysine 337–arginine 357. Residues aspartate 358–glycine 372 are Extracellular-facing. Residues phenylalanine 373–glutamine 393 form a helical membrane-spanning segment. Residues lysine 394–threonine 422 are Cytoplasmic-facing. The segment at residues valine 423 to glutamate 443 is an intramembrane region (helical). Residues serine 444 to proline 461 lie on the Cytoplasmic side of the membrane. A helical transmembrane segment spans residues proline 462–asparagine 482. Topologically, residues threonine 483–leucine 505 are extracellular. The helical transmembrane segment at tyrosine 506–proline 526 threads the bilayer. The Cytoplasmic portion of the chain corresponds to proline 527–glycine 546. The helical transmembrane segment at leucine 547–alanine 567 threads the bilayer. The Extracellular segment spans residues isoleucine 568–leucine 600. Asparagine 584 and asparagine 594 each carry an N-linked (GlcNAc...) asparagine glycan.

Belongs to the SLC13A/DASS transporter (TC 2.A.47) family. NADC subfamily. In terms of tissue distribution, highly expressed in proximal parts of straight tubules in the kidney. Detected in placenta, in brain, and in liver. Strongly expressed within the meningeal layers of supporting tissue that surround the brain and relatively weakly expressed throughout the cerebral cortex, hippocampus, and cerebellum.

It localises to the cell membrane. It catalyses the reaction succinate(out) + 3 Na(+)(out) = succinate(in) + 3 Na(+)(in). The catalysed reaction is 2-oxoglutarate(out) + 3 Na(+)(out) = 2-oxoglutarate(in) + 3 Na(+)(in). It carries out the reaction N-acetyl-L-aspartate(out) + 3 Na(+)(out) = N-acetyl-L-aspartate(in) + 3 Na(+)(in). The enzyme catalyses glutarate(out) + 3 Na(+)(out) = glutarate(in) + 3 Na(+)(in). It catalyses the reaction fumarate(out) + 3 Na(+)(out) = fumarate(in) + 3 Na(+)(in). The catalysed reaction is malate(out) + 3 Na(+)(out) = malate(in) + 3 Na(+)(in). It carries out the reaction 2,2-dimethylsuccinate(out) + 3 Na(+)(out) = 2,2-dimethylsuccinate(in) + 3 Na(+)(in). The enzyme catalyses 2,3-dimethylsuccinate(out) + 3 Na(+)(out) = 2,3-dimethylsuccinate(in) + 3 Na(+)(in). It catalyses the reaction itaconate(out) + 3 Na(+)(out) = itaconate(in) + 3 Na(+)(in). Li(+) decreases succinate transport in the presence of Na(+). High-affinity sodium-dicarboxylate cotransporter that accepts a range of substrates with 4-6 carbon atoms, such as the citric acid cycle intermediates succinate and alpha-ketoglutarate (2-oxoglutarate), as well as other compounds including N-acetyl-L-aspartate. Transports the dicarboxylate into the cell with a probable stoichiometry of 3 Na(+) for 1 divalent dicarboxylate, rendering the process electrogenic. Can transport citrate in a Na(+)-dependent manner, recognizing the divalent form of citrate rather than the trivalent form which is normally found in blood. Imports itaconate in hepatocytes leading to activation of TFEB-dependent lysosomal biogenesis involved in antibacterial innate immune response. This chain is Na(+)/dicarboxylate cotransporter 3 (Slc13a3), found in Rattus norvegicus (Rat).